A 513-amino-acid polypeptide reads, in one-letter code: MTTSKIGVRHAGHGHTVNIKYGYIIFGVSVLYALLLASAHFLELRQWRRQKRPSRSSVWARINNAPFWVHTLLWAAIVVGLAFTNVHDLSQNWTVVVKRLGRLAFCLVPLDLALALRPCLLGQSYLELMPLHKWLSRLIILAGVVHGIGFFVKWTIHHQLGKAKRWANLAGIIVALFSVLLVIVSSRPVRRRFYSYFYAFHNFTVALFVLLMIWHARPGVSDFVLLSVALLLFQGASRVYNGYSVPGLTIVDADAASLRLLRLQKPNSFPSVWQPGSHIRVGLPLSSWQSWVFPAHLYTLCSSPANDTLNLVVKKGRRFEMLTSLEYRVSCPYASLPTPWLSTAENVHIVCGGSGISLGIPLYEYFDNKSSVLANLHWCVSNARDTFVLSELGVNNPVNVYVTSGKIDQSSYDDADNEDAGLLGAGDNIELEPIPAENKSNPFTDDHAVNCAEQRIQMHAGRPNLSEILASFSETDDNAHKLLIVCGPVGLIRDVRAYGDAHGIAVFSELYNM.

7 consecutive transmembrane segments (helical) span residues 22–42, 66–86, 103–123, 138–158, 166–186, 193–213, and 219–239; these read GYII…AHFL, PFWV…FTNV, LAFC…LLGQ, LIIL…TIHH, WANL…IVSS, FYSY…LLMI, and GVSD…ASRV. One can recognise a Ferric oxidoreductase domain in the interval 100 to 211; sequence LGRLAFCLVP…NFTVALFVLL (112 aa). The 129-residue stretch at 240-368 folds into the FAD-binding FR-type domain; the sequence is YNGYSVPGLT…GIPLYEYFDN (129 aa).

It belongs to the ferric reductase (FRE) family. AIM14 subfamily.

The protein resides in the membrane. Functionally, probable cell surface metalloreductase. May be involved in iron or copper homeostasis. The chain is Probable metalloreductase AIM14 (AIM14) from Clavispora lusitaniae (strain ATCC 42720) (Yeast).